The primary structure comprises 278 residues: Cytidine kinase (278 aa).

203–208 (TRGEKG) is a binding site for ATP. Catalysis depends on aspartate 237, which acts as the Proton acceptor.

The protein belongs to the carbohydrate kinase PfkB family. It depends on Mg(2+) as a cofactor.

The enzyme catalyses cytidine + ATP = CMP + ADP + H(+). In terms of biological role, involved in nucleoside degradation. Phosphorylates cytidine to CMP. Can also act on deoxycytidine and uridine, but is most active with cytidine. ATP is the most preferred phosphate donor, but it can also use GTP, CTP or UTP. This chain is Cytidine kinase, found in Thermococcus kodakarensis (strain ATCC BAA-918 / JCM 12380 / KOD1) (Pyrococcus kodakaraensis (strain KOD1)).